A 613-amino-acid polypeptide reads, in one-letter code: Dihydroxy-acid dehydratase (613 aa).

Residue Asp81 coordinates Mg(2+). [2Fe-2S] cluster is bound at residue Cys122. Residues Asp123 and Lys124 each coordinate Mg(2+). The residue at position 124 (Lys124) is an N6-carboxylysine. Residue Cys195 coordinates [2Fe-2S] cluster. Glu491 lines the Mg(2+) pocket. Catalysis depends on Ser517, which acts as the Proton acceptor.

The protein belongs to the IlvD/Edd family. As to quaternary structure, homodimer. It depends on [2Fe-2S] cluster as a cofactor. Mg(2+) is required as a cofactor.

It carries out the reaction (2R)-2,3-dihydroxy-3-methylbutanoate = 3-methyl-2-oxobutanoate + H2O. The enzyme catalyses (2R,3R)-2,3-dihydroxy-3-methylpentanoate = (S)-3-methyl-2-oxopentanoate + H2O. It functions in the pathway amino-acid biosynthesis; L-isoleucine biosynthesis; L-isoleucine from 2-oxobutanoate: step 3/4. The protein operates within amino-acid biosynthesis; L-valine biosynthesis; L-valine from pyruvate: step 3/4. Functionally, functions in the biosynthesis of branched-chain amino acids. Catalyzes the dehydration of (2R,3R)-2,3-dihydroxy-3-methylpentanoate (2,3-dihydroxy-3-methylvalerate) into 2-oxo-3-methylpentanoate (2-oxo-3-methylvalerate) and of (2R)-2,3-dihydroxy-3-methylbutanoate (2,3-dihydroxyisovalerate) into 2-oxo-3-methylbutanoate (2-oxoisovalerate), the penultimate precursor to L-isoleucine and L-valine, respectively. The sequence is that of Dihydroxy-acid dehydratase from Aliivibrio fischeri (strain ATCC 700601 / ES114) (Vibrio fischeri).